The sequence spans 428 residues: Probable RNase MJ4 (428 aa).

Residues histidine 57, histidine 59, aspartate 61, histidine 62, histidine 143, aspartate 165, and histidine 397 each contribute to the Zn(2+) site.

Belongs to the metallo-beta-lactamase superfamily. RNA-metabolizing metallo-beta-lactamase-like family. It depends on Zn(2+) as a cofactor.

Functionally, probably an RNase. This Methanocaldococcus jannaschii (strain ATCC 43067 / DSM 2661 / JAL-1 / JCM 10045 / NBRC 100440) (Methanococcus jannaschii) protein is Probable RNase MJ4.